Reading from the N-terminus, the 325-residue chain is Heat-inducible transcription repressor HrcA (325 aa).

Belongs to the HrcA family.

In terms of biological role, negative regulator of class I heat shock genes (grpE-dnaK-dnaJ and groELS operons). Prevents heat-shock induction of these operons. The protein is Heat-inducible transcription repressor HrcA of Staphylococcus haemolyticus (strain JCSC1435).